A 204-amino-acid chain; its full sequence is GTP cyclohydrolase-2 (204 aa).

49–53 (RIHSE) contributes to the GTP binding site. 3 residues coordinate Zn(2+): C54, C65, and C67. GTP is bound by residues Q70, 92–94 (EGR), and T114. D126 acts as the Proton acceptor in catalysis. Residue R128 is the Nucleophile of the active site. 2 residues coordinate GTP: T149 and K154.

It belongs to the GTP cyclohydrolase II family. Requires Zn(2+) as cofactor.

The catalysed reaction is GTP + 4 H2O = 2,5-diamino-6-hydroxy-4-(5-phosphoribosylamino)-pyrimidine + formate + 2 phosphate + 3 H(+). It functions in the pathway cofactor biosynthesis; riboflavin biosynthesis; 5-amino-6-(D-ribitylamino)uracil from GTP: step 1/4. Its function is as follows. Catalyzes the conversion of GTP to 2,5-diamino-6-ribosylamino-4(3H)-pyrimidinone 5'-phosphate (DARP), formate and pyrophosphate. In Shewanella baltica (strain OS155 / ATCC BAA-1091), this protein is GTP cyclohydrolase-2.